A 230-amino-acid chain; its full sequence is Biosynthetic peptidoglycan transglycosylase (230 aa).

The helical transmembrane segment at 11–31 (VLLVLVALFVLYQLWIFTLVL) threads the bilayer.

This sequence belongs to the glycosyltransferase 51 family.

It is found in the cell inner membrane. It carries out the reaction [GlcNAc-(1-&gt;4)-Mur2Ac(oyl-L-Ala-gamma-D-Glu-L-Lys-D-Ala-D-Ala)](n)-di-trans,octa-cis-undecaprenyl diphosphate + beta-D-GlcNAc-(1-&gt;4)-Mur2Ac(oyl-L-Ala-gamma-D-Glu-L-Lys-D-Ala-D-Ala)-di-trans,octa-cis-undecaprenyl diphosphate = [GlcNAc-(1-&gt;4)-Mur2Ac(oyl-L-Ala-gamma-D-Glu-L-Lys-D-Ala-D-Ala)](n+1)-di-trans,octa-cis-undecaprenyl diphosphate + di-trans,octa-cis-undecaprenyl diphosphate + H(+). The protein operates within cell wall biogenesis; peptidoglycan biosynthesis. Its function is as follows. Peptidoglycan polymerase that catalyzes glycan chain elongation from lipid-linked precursors. The chain is Biosynthetic peptidoglycan transglycosylase from Aromatoleum aromaticum (strain DSM 19018 / LMG 30748 / EbN1) (Azoarcus sp. (strain EbN1)).